A 308-amino-acid polypeptide reads, in one-letter code: Ribosomal RNA small subunit methyltransferase H (308 aa).

S-adenosyl-L-methionine-binding positions include 36 to 38 (GGH), D55, F82, D103, and Q110.

Belongs to the methyltransferase superfamily. RsmH family.

The protein resides in the cytoplasm. It carries out the reaction cytidine(1402) in 16S rRNA + S-adenosyl-L-methionine = N(4)-methylcytidine(1402) in 16S rRNA + S-adenosyl-L-homocysteine + H(+). In terms of biological role, specifically methylates the N4 position of cytidine in position 1402 (C1402) of 16S rRNA. The polypeptide is Ribosomal RNA small subunit methyltransferase H (Helicobacter pylori (strain ATCC 700392 / 26695) (Campylobacter pylori)).